The primary structure comprises 432 residues: Anaerobic glycerol-3-phosphate dehydrogenase subunit B (432 aa).

Belongs to the anaerobic G-3-P dehydrogenase subunit B family. In terms of assembly, composed of a catalytic GlpA/B dimer and of membrane bound GlpC. The cofactor is FMN.

It carries out the reaction a quinone + sn-glycerol 3-phosphate = dihydroxyacetone phosphate + a quinol. It participates in polyol metabolism; glycerol degradation via glycerol kinase pathway; glycerone phosphate from sn-glycerol 3-phosphate (anaerobic route): step 1/1. Conversion of glycerol 3-phosphate to dihydroxyacetone. Uses fumarate or nitrate as electron acceptor. This Haemophilus influenzae (strain PittGG) protein is Anaerobic glycerol-3-phosphate dehydrogenase subunit B.